Here is a 127-residue protein sequence, read N- to C-terminus: Large ribosomal subunit protein bL17 (127 aa).

This sequence belongs to the bacterial ribosomal protein bL17 family. In terms of assembly, part of the 50S ribosomal subunit. Contacts protein L32.

The protein is Large ribosomal subunit protein bL17 of Alcanivorax borkumensis (strain ATCC 700651 / DSM 11573 / NCIMB 13689 / SK2).